Reading from the N-terminus, the 280-residue chain is 4-diphosphocytidyl-2-C-methyl-D-erythritol kinase (280 aa).

Residue Lys-8 is part of the active site. Pro-91–Thr-101 serves as a coordination point for ATP. Residue Asp-133 is part of the active site.

Belongs to the GHMP kinase family. IspE subfamily.

It catalyses the reaction 4-CDP-2-C-methyl-D-erythritol + ATP = 4-CDP-2-C-methyl-D-erythritol 2-phosphate + ADP + H(+). The protein operates within isoprenoid biosynthesis; isopentenyl diphosphate biosynthesis via DXP pathway; isopentenyl diphosphate from 1-deoxy-D-xylulose 5-phosphate: step 3/6. Its function is as follows. Catalyzes the phosphorylation of the position 2 hydroxy group of 4-diphosphocytidyl-2C-methyl-D-erythritol. The chain is 4-diphosphocytidyl-2-C-methyl-D-erythritol kinase from Clostridium botulinum (strain ATCC 19397 / Type A).